The following is a 243-amino-acid chain: Phosphate-specific transport system accessory protein PhoU (243 aa).

It belongs to the PhoU family. Homodimer. Interacts with phosphate regulon transcriptional regulatory protein PhoB and ferric uptake regulation protein Fur.

Its subcellular location is the cytoplasm. In terms of biological role, part of the phosphate (Pho) regulon, which plays a key role in phosphate homeostasis. Encoded together with proteins of the phosphate-specific transport (Pst) system in the polycistronic pstSCAB-phoU operon. PhoU is essential for the repression of the Pho regulon at high phosphate conditions. In this role, it may bind, possibly as a chaperone, to PhoR, PhoB or a PhoR-PhoB complex to promote dephosphorylation of phospho-PhoB, or inhibit formation of the PhoR-PhoB transitory complex. In Edwardsiella tarda, this protein is Phosphate-specific transport system accessory protein PhoU.